The primary structure comprises 493 residues: Monodehydroascorbate reductase, chloroplastic/mitochondrial (493 aa).

The N-terminal 51 residues, 1-51 (MSAVRRVMALASTTLPTKSGLSLWCPSSPSLARRFPARFSPIGSRIASRSL), are a transit peptide targeting the chloroplast and mitochondrion. FAD-binding positions include 68 to 71 (GGNA), Glu95, Arg102, Lys107, and 201 to 202 (RE). NAD(+) contacts are provided by residues 224–230 (GGYIGME), Glu248, Arg254, and Gly313. An NADP(+)-binding site is contributed by 226-230 (YIGME). Positions 254 and 313 each coordinate NADP(+). Asp351 serves as a coordination point for FAD. An NAD(+)-binding site is contributed by 367-368 (EH). 367–368 (EH) provides a ligand contact to NADP(+). Val369 contacts FAD. Arg373 provides a ligand contact to L-ascorbate. Tyr398 is an FAD binding site. Tyr398 lines the NAD(+) pocket. An NADP(+)-binding site is contributed by Tyr398. Arg400 contributes to the L-ascorbate binding site.

This sequence belongs to the FAD-dependent oxidoreductase family. Interacts in vitro with TRXy. FAD is required as a cofactor.

The protein resides in the plastid. It is found in the chloroplast. It localises to the mitochondrion. It carries out the reaction 2 monodehydro-L-ascorbate radical + NADH + H(+) = 2 L-ascorbate + NAD(+). The enzyme catalyses 2,4,6-trinitrotoluene + NADH = 2,4,6-trinitrotoluene radical + e(-) + NAD(+). Redox regulation of the activity by thioredoxin TRXy1. Functionally, catalyzes the conversion of monodehydroascorbate (MDA) to ascorbate, oxidizing NADH in the process. Mediates phytotoxicity of 2,4,6-trinitrotoluene (TNT), an explosive and environmental pollutant, by reducing TNT and forming a nitro radical that spontaneously reacts with atmospheric oxygen, generating reactive superoxide. Can also use 1-chloro-2,4-dinitrobenzene (CDNB) as substrate, but not 1-chloro-4-nitrobenzene (CNB). This is Monodehydroascorbate reductase, chloroplastic/mitochondrial from Arabidopsis thaliana (Mouse-ear cress).